Here is a 312-residue protein sequence, read N- to C-terminus: Adenylyl-sulfate kinase, chloroplastic (312 aa).

Position 142–149 (G142–S149) interacts with ATP. S216 (phosphoserine intermediate) is an active-site residue.

It belongs to the APS kinase family.

Its subcellular location is the plastid. It localises to the chloroplast. It carries out the reaction adenosine 5'-phosphosulfate + ATP = 3'-phosphoadenylyl sulfate + ADP + H(+). Its pathway is sulfur metabolism; hydrogen sulfide biosynthesis; sulfite from sulfate: step 2/3. Its function is as follows. Catalyzes the synthesis of activated sulfate. This is Adenylyl-sulfate kinase, chloroplastic (AKN) from Catharanthus roseus (Madagascar periwinkle).